Here is a 306-residue protein sequence, read N- to C-terminus: Pantothenate kinase (306 aa).

90-97 (GSVAVGKS) provides a ligand contact to ATP.

This sequence belongs to the prokaryotic pantothenate kinase family.

It localises to the cytoplasm. It carries out the reaction (R)-pantothenate + ATP = (R)-4'-phosphopantothenate + ADP + H(+). It functions in the pathway cofactor biosynthesis; coenzyme A biosynthesis; CoA from (R)-pantothenate: step 1/5. The sequence is that of Pantothenate kinase from Lactococcus lactis subsp. cremoris (strain MG1363).